The primary structure comprises 927 residues: E3 ubiquitin-protein ligase HOS1 (927 aa).

The RING-type; degenerate zinc-finger motif lies at 53-93; the sequence is CRATRDLASCGRFVNYVLNPCGHASLCTECCQRCDVCPICR. 3 disordered regions span residues 678–699, 782–806, and 832–927; these read SGQF…LPDA, FKDL…SPEV, and VKSS…FAAR. Basic and acidic residues predominate over residues 797–806; sequence KRTEESSPEV. 2 stretches are compositionally biased toward polar residues: residues 832-851 and 878-892; these read VKSS…STFF and NNNN…NNSG. Positions 917-927 are enriched in basic residues; that stretch reads KGRRRRRFAAR.

Interacts with SCRM/ICE1, FLK and MSI4/FVE. Ubiquitously expressed with higher levels in leaf vasculature, roots and root tips.

It is found in the nucleus. The protein localises to the cytoplasm. It catalyses the reaction S-ubiquitinyl-[E2 ubiquitin-conjugating enzyme]-L-cysteine + [acceptor protein]-L-lysine = [E2 ubiquitin-conjugating enzyme]-L-cysteine + N(6)-ubiquitinyl-[acceptor protein]-L-lysine.. Its pathway is protein modification; protein ubiquitination. E3 ubiquitin-protein ligase that mediates ubiquitination and subsequent proteasomal degradation of the transcription factor ICE1. Acts as a negative regulator of cold signaling pathways. Probably involved in recruiting the NUP107-160 subcomplex of the nuclear pore complex to chromatin. Controls flowering time in response to ambient temperatures (16 and 23 degrees Celsius) and intermittent cold, probably via the regulation of FT and TSF levels. This Arabidopsis thaliana (Mouse-ear cress) protein is E3 ubiquitin-protein ligase HOS1 (HOS1).